The sequence spans 356 residues: Tungsten-containing aldehyde ferredoxin oxidoreductase cofactor-modifying protein (356 aa).

The Radical SAM core domain occupies 1-214 (MKYLYLEITS…PIVNELYKIA (214 aa)). Positions 12, 16, and 19 each coordinate [4Fe-4S] cluster.

The protein belongs to the radical SAM superfamily. Requires [4Fe-4S] cluster as cofactor.

Involved in the biosynthesis of a molybdopterin-based tungsten cofactor. In Pyrococcus furiosus (strain ATCC 43587 / DSM 3638 / JCM 8422 / Vc1), this protein is Tungsten-containing aldehyde ferredoxin oxidoreductase cofactor-modifying protein (cmo).